Here is a 147-residue protein sequence, read N- to C-terminus: Hemoglobin subunit gamma-2 (147 aa).

The Globin domain occupies 3 to 147 (HFTEEDKATI…VASALSSRYH (145 aa)). At T13 the chain carries Phosphothreonine. Residues S45, S51, and S53 each carry the phosphoserine modification. K60 carries the post-translational modification N6-acetyllysine. Residue H64 participates in heme b binding. At K83 the chain carries N6-acetyllysine. H93 provides a ligand contact to heme b. Residue C94 is modified to S-nitrosocysteine. Residues S140, S143, and S144 each carry the phosphoserine modification.

This sequence belongs to the globin family. In terms of assembly, heterotetramer of two alpha chains and two gamma chains in fetal hemoglobin (Hb F). In terms of tissue distribution, red blood cells.

In terms of biological role, gamma chains make up the fetal hemoglobin F, in combination with alpha chains. The chain is Hemoglobin subunit gamma-2 (HBG2) from Hylobates lar (Lar gibbon).